The following is a 185-amino-acid chain: Large ribosomal subunit protein uL5 (185 aa).

Belongs to the universal ribosomal protein uL5 family. As to quaternary structure, part of the 50S ribosomal subunit; part of the 5S rRNA/L5/L18/L25 subcomplex. Contacts the 5S rRNA and the P site tRNA. Forms a bridge to the 30S subunit in the 70S ribosome.

In terms of biological role, this is one of the proteins that bind and probably mediate the attachment of the 5S RNA into the large ribosomal subunit, where it forms part of the central protuberance. In the 70S ribosome it contacts protein S13 of the 30S subunit (bridge B1b), connecting the 2 subunits; this bridge is implicated in subunit movement. Contacts the P site tRNA; the 5S rRNA and some of its associated proteins might help stabilize positioning of ribosome-bound tRNAs. The protein is Large ribosomal subunit protein uL5 of Caulobacter vibrioides (strain NA1000 / CB15N) (Caulobacter crescentus).